A 124-amino-acid chain; its full sequence is Large ribosomal subunit protein bL19 (124 aa).

Belongs to the bacterial ribosomal protein bL19 family.

Its function is as follows. This protein is located at the 30S-50S ribosomal subunit interface and may play a role in the structure and function of the aminoacyl-tRNA binding site. The sequence is that of Large ribosomal subunit protein bL19 from Acidiphilium cryptum (strain JF-5).